A 408-amino-acid chain; its full sequence is Exo-alpha-sialidase ARB_03431 (408 aa).

The N-terminal stretch at 1-22 (MGIKQWLLSLVVVAISATATQA) is a signal peptide. Substrate contacts are provided by R62, R81, D87, and Q150. Residue N237 is glycosylated (N-linked (GlcNAc...) asparagine). Residues R267, R324, 324–325 (RT), 333–334 (YD), K339, Y360, D378, and 378–380 (DWY) each bind substrate. A glycan (N-linked (GlcNAc...) asparagine) is linked at N398.

Belongs to the glycosyl hydrolase 33 family.

Its subcellular location is the secreted. The catalysed reaction is Hydrolysis of alpha-(2-&gt;3)-, alpha-(2-&gt;6)-, alpha-(2-&gt;8)- glycosidic linkages of terminal sialic acid residues in oligosaccharides, glycoproteins, glycolipids, colominic acid and synthetic substrates.. Its function is as follows. Sialidase is able to release sialic acid from a wide variety of natural substrates. The chain is Exo-alpha-sialidase ARB_03431 from Arthroderma benhamiae (strain ATCC MYA-4681 / CBS 112371) (Trichophyton mentagrophytes).